Here is a 226-residue protein sequence, read N- to C-terminus: Pre-mRNA-splicing factor SPF27 (226 aa).

Ala2 carries the post-translational modification N-acetylalanine. The residue at position 94 (Ser94) is a Phosphoserine. The stretch at 139 to 223 forms a coiled coil; the sequence is YNENLVHMIE…HGEANKENIR (85 aa).

Belongs to the SPF27 family. Component of the pre-catalytic and catalytic spliceosome complexes. Component of the postcatalytic spliceosome P complex. Component of the PRP19-CDC5L splicing complex composed of a core complex comprising a homotetramer of PRPF19, CDC5L, PLRG1 and BCAS2, and at least three less stably associated proteins CTNNBL1, CWC15 and HSPA8. Interacts directly in the complex with PRPF19, CDC5L and PLRG1.

It localises to the nucleus. The protein resides in the nucleolus. Functionally, required for pre-mRNA splicing as component of the activated spliceosome. Component of the PRP19-CDC5L complex that forms an integral part of the spliceosome and is required for activating pre-mRNA splicing. May have a scaffolding role in the spliceosome assembly as it contacts all other components of the core complex. The PRP19-CDC5L complex may also play a role in the response to DNA damage (DDR). This chain is Pre-mRNA-splicing factor SPF27 (BCAS2), found in Pongo abelii (Sumatran orangutan).